The following is a 231-amino-acid chain: PX domain-containing protein 1 (231 aa).

One can recognise a PX domain in the interval Met-1 to Gln-134.

The sequence is that of PX domain-containing protein 1 (PXDC1) from Homo sapiens (Human).